The primary structure comprises 188 residues: Elongation factor P (188 aa).

Lys-34 carries the post-translational modification N6-(3,6-diaminohexanoyl)-5-hydroxylysine.

Belongs to the elongation factor P family. In terms of processing, is beta-lysylated on the epsilon-amino group of Lys-34 by the combined action of EpmA and EpmB, and then hydroxylated on the C5 position of the same residue by EpmC. Lysylation is critical for the stimulatory effect of EF-P on peptide-bond formation. The lysylation moiety would extend toward the peptidyltransferase center and stabilize the terminal 3-CCA end of the tRNA. The hydroxylation of the C5 position on Lys-34 would allow additional potential stabilizing hydrogen-bond interactions with the P-tRNA.

The protein resides in the cytoplasm. It functions in the pathway protein biosynthesis; polypeptide chain elongation. Functionally, involved in peptide bond synthesis. Alleviates ribosome stalling that occurs when 3 or more consecutive Pro residues or the sequence PPG is present in a protein, possibly by augmenting the peptidyl transferase activity of the ribosome. Modification of Lys-34 is required for alleviation. This is Elongation factor P from Salmonella arizonae (strain ATCC BAA-731 / CDC346-86 / RSK2980).